The primary structure comprises 334 residues: N-acetylmuramate/N-acetylglucosamine kinase (334 aa).

Belongs to the kinase AmgK family.

It catalyses the reaction N-acetyl-D-muramate + ATP = N-acetyl-alpha-D-muramate 1-phosphate + ADP + H(+). It carries out the reaction N-acetyl-D-glucosamine + ATP = N-acetyl-alpha-D-glucosamine 1-phosphate + ADP + H(+). It functions in the pathway cell wall biogenesis; peptidoglycan recycling. Its function is as follows. Sugar kinase that catalyzes the ATP-dependent phosphorylation of N-acetylmuramate (MurNAc) and N-acetylglucosamine (GlcNAc) at its C1 hydroxyl group, leading to MurNAc alpha-1P and GlcNAc alpha-1P, respectively. Is likely involved in peptidoglycan recycling as part of a cell wall recycling pathway that bypasses de novo biosynthesis of the peptidoglycan precursor UDP-MurNAc. Is able to complement the fosfomycin sensitivity phenotype of a P.putida mutant lacking amgK. The protein is N-acetylmuramate/N-acetylglucosamine kinase of Neisseria meningitidis serogroup B (strain ATCC BAA-335 / MC58).